Consider the following 296-residue polypeptide: Probable endonuclease 4 (296 aa).

9 residues coordinate Zn(2+): H68, H109, E144, D178, H181, H213, D226, H228, and E258.

It belongs to the AP endonuclease 2 family. Zn(2+) is required as a cofactor.

It carries out the reaction Endonucleolytic cleavage to 5'-phosphooligonucleotide end-products.. Its function is as follows. Endonuclease IV plays a role in DNA repair. It cleaves phosphodiester bonds at apurinic or apyrimidinic (AP) sites, generating a 3'-hydroxyl group and a 5'-terminal sugar phosphate. The polypeptide is Probable endonuclease 4 (Staphylococcus saprophyticus subsp. saprophyticus (strain ATCC 15305 / DSM 20229 / NCIMB 8711 / NCTC 7292 / S-41)).